The primary structure comprises 477 residues: MTLNRKCVVIHNGSHRTVAGFSNVELPQCIIPSSYIKRTDEGGEAEFIFGTYNMIDAAAEKRNGDEVYTLVDSQGLPYNWDALEMQWRYLYDTQLKVSPEELPLVITMPATNGKPDMAILERYYELAFDKLNVPVFQIVIEPLAIALSMGKSSAFVIDIGASGCNVTPIIDGIVVKNAVVRSKFGGDFLDFQVHERLAPLIKEENDMENMADEQKRSTDVWYEASTWIQQFKSTMLQVSEKDLFELERYYKEQADIYAKQQEQLKQMDQQLQYTALTGSPNNPLVQKKNFLFKPLNKTLTLDLKECYQFAEYLFKPQLISDKFSPEDGLGPLMAKSVKKAGASINSMKANTSTNPNGLGTSHINTNVGDNNSTASSSNISPEQVYSLLLTNVIITGSTSLIEGMEQRIIKELSIRFPQYKLTTFANQVMMDRKIQGWLGALTMANLPSWSLGKWYSKEDYETLKRDRKQSQATNATN.

The protein belongs to the actin family. As to quaternary structure, forms a heterodimer with ARP9. Interacts with NPL6. Component of the two forms of the RSC complex composed of at least either RSC1 or RSC2, and ARP7, ARP9, LDB7, NPL6, RSC3, RSC30, RSC4, RSC58, RSC6, RSC8, RSC9, SFH1, STH1, HTL1 and probably RTT102. The complexes interact with histone and histone variant components of centromeric chromatin. Component of the SWI/SNF global transcription activator complex. The 1.14 MDa SWI/SNF complex is composed of 11 different subunits: one copy each of SWI1, SNF2/SWI2, SNF5, SNF12/SWP73, ARP7/SWP61, ARP9/SWP59; two copies each of SWI3, SNF6, SNF11, SWP82; and three copies of TAF14/SWP29.

The protein resides in the nucleus. In terms of biological role, component of the chromatin structure remodeling complex (RSC), which is involved in transcription regulation and nucleosome positioning. RSC is responsible for the transfer of a histone octamer from a nucleosome core particle to naked DNA. The reaction requires ATP and involves an activated RSC-nucleosome intermediate. Remodeling reaction also involves DNA translocation, DNA twist and conformational change. As a reconfigurer of centromeric and flanking nucleosomes, RSC complex is required both for proper kinetochore function in chromosome segregation and, via a PKC1-dependent signaling pathway, for organization of the cellular cytoskeleton. This subunit is involved in transcriptional regulation. Heterodimer of ARP7 and ARP9 functions with HMG box proteins to facilitate proper chromatin architecture. Heterodimer formation is necessary for assembly into RSC complex. Part of the SWI/SNF complex, an ATP-dependent chromatin remodeling complex, is required for the positive and negative regulation of gene expression of a large number of genes. It changes chromatin structure by altering DNA-histone contacts within a nucleosome, leading eventually to a change in nucleosome position, thus facilitating or repressing binding of gene-specific transcription factors. This is Actin-related protein 7 (ARP7) from Saccharomyces cerevisiae (strain ATCC 204508 / S288c) (Baker's yeast).